Consider the following 715-residue polypeptide: Eukaryotic peptide chain release factor GTP-binding subunit (715 aa).

The span at Met-1–Lys-12 shows a compositional bias: polar residues. Disordered regions lie at residues Met-1 to Lys-148 and Ala-168 to Ala-262. Positions Ser-5–Gln-128 are several sort of repeats. Residues Gln-13–Gln-25 show a composition bias toward low complexity. Polar residues predominate over residues Asn-26 to Val-37. Low complexity-rich tracts occupy residues Gln-39–Gly-129 and Ser-176–Pro-198. The charged stretch occupies residues Gly-129 to Asp-285. 2 stretches are compositionally biased toward basic and acidic residues: residues Gln-199–Ala-208 and Glu-218–Ala-233. Positions Lys-290–Arg-515 constitute a tr-type G domain. The G1 stretch occupies residues Gly-299–Ser-306. Gly-299–Ser-306 contributes to the GTP binding site. A G2 region spans residues Gly-355–Glu-359. Thr-373 carries the phosphothreonine modification. Positions Asp-376–Gly-379 are G3. Residues Asp-376 to His-380 and Asn-438 to Asp-441 contribute to the GTP site. Residues Asn-438–Asp-441 are G4. Residues Ser-479–Tyr-481 are G5.

The protein belongs to the TRAFAC class translation factor GTPase superfamily. Classic translation factor GTPase family. ERF3 subfamily.

The protein resides in the cytoplasm. Involved in translation termination. Stimulates the activity of ERF1. Binds guanine nucleotides. In Candida albicans (Yeast), this protein is Eukaryotic peptide chain release factor GTP-binding subunit (SUP35).